Here is a 534-residue protein sequence, read N- to C-terminus: NAD(P)H-quinone oxidoreductase chain 4 (534 aa).

Transmembrane regions (helical) follow at residues 12-32 (FPWLSASILFPIGSAFVIPFF), 44-64 (FALSIALTTFLITVGSYINGF), 94-114 (ISMPLILLTSFITALAVLAAW), 120-140 (PKLFFFLILVMDGGQIAVFAV), 144-164 (LLFFLTWELELIPVYLLLAIW), 176-196 (FIIYTAGSSIFILLAALAMGF), 220-240 (ILCYVGLLIAFGVKLPIVPLH), 251-271 (TAPVHMLLAGILLKMGGYALL), 285-305 (FAPLLIVLGVVNIIYAALTSF), 314-334 (IAYSSISHMGFVLIGIGSFSS), 340-360 (AMLQMVSHGLIGASLFFLVGA), 384-404 (FALWTACSLASLALPGMSGFV), 425-445 (VIMASLAAIGVILTPIYLLSM), and 472-492 (VYIIACLLLPIIGIGLYPRLV).

This sequence belongs to the complex I subunit 4 family.

It is found in the cellular thylakoid membrane. It catalyses the reaction a plastoquinone + NADH + (n+1) H(+)(in) = a plastoquinol + NAD(+) + n H(+)(out). The enzyme catalyses a plastoquinone + NADPH + (n+1) H(+)(in) = a plastoquinol + NADP(+) + n H(+)(out). NDH-1 shuttles electrons from NAD(P)H, via FMN and iron-sulfur (Fe-S) centers, to quinones in the respiratory chain. The immediate electron acceptor for the enzyme in this species is believed to be plastoquinone. Couples the redox reaction to proton translocation (for every two electrons transferred, four hydrogen ions are translocated across the cytoplasmic membrane), and thus conserves the redox energy in a proton gradient. This Prochlorococcus marinus (strain MIT 9312) protein is NAD(P)H-quinone oxidoreductase chain 4.